The sequence spans 2271 residues: MSKRQKAFHDSLANEKTRVRLYKSGKNWVKSGIKEIEMFKIMGLPFISHSLVSQDNQSISKKMTGYGLKTTAVIGGAFTVNMLHDQQAFAASDAPLTSELNTQSETVGNQNSTTIEASTSTADSTSVTKNSSSVQTSNSDTVSSEKSEKVTSTTNSTSNQQEKLTSTSESTSSKNTTSSSDTKSVASTSSTEQPINTSTNQSTASNNTSQSTTPSSVNLNKTSTTSTSTAPVKLRTFSRLAMSTFASAATTTAVTANTITVNKDNLKQYMTTSGNATYDQSTGIVTLTQDAYSQKGAITLGTRIDSNKSFHFSGKVNLGNKYEGHGNGGDGIGFAFSPGVLGETGLNGAAVGIGGLSNAFGFKLDTYHNTSKPNSAAKANADPSNVAGGGAFGAFVTTDSYGVATTYTSSSTADNAAKLNVQPTNNTFQDFDINYNGDTKVMTVKYAGQTWTRNISDWIAKSGTTNFSLSMTASTGGATNLQQVQFGTFEYTESAVTQVRYVDVTTGKDIIPPKTYSGNVDQVVTIDNQQSALTAKGYNYTSVDSSYASTYNDTNKTVKMTNAGQSVTYYFTDVKAPTVTVGNQTIEVGKTMNPIVLTTTDNGTGTVTNTVTGLPSGLSYDSATNSIIGTPTKIGQSTVTVVSTDQANNKSTTTFTINVVDTTAPTVTPIGDQSSEVYSPISPIKIATQDNSGNAVTNTVTGLPSGLTFDSTNNTISGTPTNIGTSTISIVSTDASGNKTTTTFKYEVTRNSMSDSVSTSGSTQQSQSVSTSKADSQSASTSTSGSIVVSTSASTSKSTSVSLSDSVSASKSLSTSESNSVSSSTSTSLVNSQSVSSSMSDSASKSTSLSDSISNSSSTEKSESLSTSTSDSLRTSTSLSDSLSMSTSGSLSKSQSLSTSISGSSSTSASLSDSTSNAISTSTSLSESASTSDSISISNSIANSQSASTSKSDSQSTSISLSTSDSKSMSTSESLSDSTSTSGSVSGSLSIAASQSVSTSTSDSMSTSEIVSDSISTSGSLSASDSKSMSVSSSMSTSQSGSTSESLSDSQSTSDSDSKSLSQSTSQSGSTSTSTSTSASVRTSESQSTSGSMSASQSDSMSISTSFSDSTSDSKSASTASSESISQSAFTSTSGSVSTSTSLSTSNSERTSTSMSDSTSLSTSESDSISESTSTSDSISEAISASESTFISLSESNSTSDSESQSASAFLSESLSESTSESTSESVSSSTSESTSLSDSTSESGSTSTSLSNSTSGSTSISTSTSISESTSTFKSESVSTSLSMSTSTSLSDSTSLSTSLSDSTSDSKSDSLSTSMSTSDSISTSKSDSISTSTSLSGSTSESESDSTSSSESKSDSTSMSISMSQSTSGSTSTSTSTSLSDSTSTSLSLSASMNQSGVDSNSASQSASNSTSTSTSESDSQSTSSYTSQSTSQSESTSTSTSLSDSTSISKSTSQSGSVSTSASLSGSESESDSQSISTSASESTSESASTSLSDSTSTSNSGSASTSTSLSNSASASESDLSSTSLSDSTSASMQSSESDSQSTSASLSDSLSTSTSNRMSTIASLSTSVSTSESGSTSESTSESDSTSTSLSDSQSTSRSTSASGSASTSTSTSDSRSTSASTSTSMRTSTSDSQSMSLSTSTSTSMSDSTSLSDSVSDSTSDSTSASTSGSMSVSISLSDSTSTSTSASEVMSASISDSQSMSESVNDSESVSESNSESDSKSMSGSTSVSDSGSLSVSTSLRKSESVSESSSLSCSQSMSDSVSTSDSSSLSVSTSLRSSESVSESDSLSDSKSTSGSTSTSTSGSLSTSTSLSGSESVSESTSLSDSISMSDSTSTSDSDSLSGSISLSGSTSLSTSDSLSDSKSLSSSQSMSGSESTSTSVSDSQSSSTSNSQFDSMSISASESDSMSTSDSSSISGSNSTSTSLSTSDSMSGSVSVSTSTSLSDSISGSTSVSDSSSTSTSTSLSDSMSQSQSTSTSASGSLSTSISTSMSMSASTSSSQSTSVSTSLSTSDSISDSTSISISGSQSTVESESTSDSTSISDSESLSTSDSDSTSTSTSDSTSGSTSTSISESLSTSGSGSTSVSDSTSMSESNSSSVSMSQDKSDSTSISDSESVSTSTSTSLSTSDSTSTSESLSTSMSGSQSISDSTSTSMSGSTSTSESNSMHPSDSMSMHHTHSTSTSRLSSEATTSTSESQSTLSATSEVTKHNGTPAQSEKRLPDTGDSIKQNGLLGGVMTLLVGLGLMKRKKKKDENDQDDSQA.

The first 89 residues, 1–89, serve as a signal peptide directing secretion; that stretch reads MSKRQKAFHD…VNMLHDQQAF (89 aa). The tract at residues 90 to 230 is serine-rich repeat region 1, SRR1; it reads AASDAPLTSE…KTSTTSTSTA (141 aa). A compositionally biased stretch (polar residues) spans 100-111; sequence LNTQSETVGNQN. Disordered regions lie at residues 100 to 229, 751 to 791, and 806 to 2243; these read LNTQ…STST, NSMS…VVST, and SVSA…GLLG. The span at 112–128 shows a compositional bias: low complexity; it reads STTIEASTSTADSTSVT. The segment covering 129-140 has biased composition (polar residues); the sequence is KNSSSVQTSNSD. Residues 150-229 show a composition bias toward low complexity; the sequence is VTSTTNSTSN…NKTSTTSTST (80 aa). The tract at residues 231-751 is non-repeat region (NRR); the sequence is PVKLRTFSRL…TTFKYEVTRN (521 aa). Composition is skewed to low complexity over residues 752-791, 806-1392, and 1402-2214; these read SMSD…VVST, SVSA…LSLS, and SNSA…ATSE. The interval 752-2232 is serine-rich repeat region 2, SRR2; that stretch reads SMSDSVSTSG…AQSEKRLPDT (1481 aa). The short motif at 2229–2233 is the LPXTG sorting signal element; that stretch reads LPDTG. Position 2232 is a pentaglycyl murein peptidoglycan amidated threonine (T2232). Residues 2233-2271 constitute a propeptide, removed by sortase; that stretch reads GDSIKQNGLLGGVMTLLVGLGLMKRKKKKDENDQDDSQA.

It belongs to the serine-rich repeat protein (SRRP) family. In terms of processing, proteolytically cleaved by a metalloprotease. Post-translationally, glycosylated. It is probable that most of the Ser residues in SSR1 and SSR2 are O-GlcNAcylated. Sequential glycosylation by sugar transferases are able to generate complex sugar polymorphisms.

It is found in the secreted. Its subcellular location is the cell wall. In terms of biological role, mediates binding to human platelets, possibly through a receptor-ligand interaction. Probably associated with virulence in endovascular infection. The polypeptide is Serine-rich adhesin for platelets (sraP) (Staphylococcus aureus (strain USA300)).